The primary structure comprises 119 residues: Protein yippee-like 3 (119 aa).

A Yippee domain is found at 19 to 116; sequence RRYSCAHCRA…IELNHMIKDN (98 aa). 4 residues coordinate Zn(2+): C23, C26, C79, and C82.

It belongs to the yippee family. In terms of processing, probably ubiquitinated leading to its degradation by the proteasome.

It is found in the nucleus. Its subcellular location is the nucleolus. Involved in proliferation and apoptosis in myeloid precursor cells. This is Protein yippee-like 3 (YPEL3) from Bos taurus (Bovine).